Consider the following 609-residue polypeptide: Arginine--tRNA ligase (609 aa).

Positions 132–142 (ANPTSSLHVGH) match the 'HIGH' region motif.

It belongs to the class-I aminoacyl-tRNA synthetase family. As to quaternary structure, monomer.

Its subcellular location is the cytoplasm. The enzyme catalyses tRNA(Arg) + L-arginine + ATP = L-arginyl-tRNA(Arg) + AMP + diphosphate. This chain is Arginine--tRNA ligase, found in Psychrobacter sp. (strain PRwf-1).